The following is an 824-amino-acid chain: Phenylalanine--tRNA ligase beta subunit (824 aa).

In terms of domain architecture, tRNA-binding spans 39 to 153; it reads SEQAKNVVIG…NIPPIGSNAV (115 aa). In terms of domain architecture, B5 spans 414–507; it reads KKSISVNLRM…RLIGYDNFDS (94 aa). Asp485, Asp491, Glu494, and Glu495 together coordinate Mg(2+). The FDX-ACB domain maps to 730-823; it reads PTVPYMERDI…LKEKIKAELR (94 aa).

Belongs to the phenylalanyl-tRNA synthetase beta subunit family. Type 1 subfamily. As to quaternary structure, tetramer of two alpha and two beta subunits. Mg(2+) is required as a cofactor.

Its subcellular location is the cytoplasm. The catalysed reaction is tRNA(Phe) + L-phenylalanine + ATP = L-phenylalanyl-tRNA(Phe) + AMP + diphosphate + H(+). This chain is Phenylalanine--tRNA ligase beta subunit, found in Prochlorococcus marinus (strain NATL2A).